A 60-amino-acid chain; its full sequence is Homeobox protein EgHBX4 (60 aa).

A DNA-binding region (homeobox) is located at residues S1–E60.

This sequence belongs to the paired homeobox family. Bicoid subfamily.

It is found in the nucleus. The protein is Homeobox protein EgHBX4 (HBX4) of Echinococcus granulosus (Hydatid tapeworm).